The chain runs to 223 residues: MQSSPLTSTLLFHIGPVAITRPVVTTWVIMAALALVCRFVTRRLAILPDGRQALLEGIVTSVAGQIEDVIRKDARPFLPLLGTLIIFLVVANLSGVLPGVEAPTSKIETPAALALIVFFSVHYFGVRERGLRGYLASFAEPKLIMLPLNILSEITRTFSLMVRLFGNIMSGEFIIGLVVALAGLFVPIPLMALEILVGLVQAYIFTVLATVFIGAAVGSVAKG.

5 helical membrane passes run V17–C37, F77–L97, K106–V126, F173–L193, and I195–A215.

Belongs to the ATPase A chain family. In terms of assembly, F-type ATPases have 2 components, CF(1) - the catalytic core - and CF(0) - the membrane proton channel. CF(1) has five subunits: alpha(3), beta(3), gamma(1), delta(1), epsilon(1). CF(0) has four main subunits: a, b, b' and c.

Its subcellular location is the cell inner membrane. Functionally, key component of the proton channel; it plays a direct role in the translocation of protons across the membrane. The sequence is that of ATP synthase subunit a 2 from Bradyrhizobium sp. (strain BTAi1 / ATCC BAA-1182).